Consider the following 172-residue polypeptide: Adenine phosphoribosyltransferase (172 aa).

It belongs to the purine/pyrimidine phosphoribosyltransferase family. Homodimer.

The protein localises to the cytoplasm. It catalyses the reaction AMP + diphosphate = 5-phospho-alpha-D-ribose 1-diphosphate + adenine. It participates in purine metabolism; AMP biosynthesis via salvage pathway; AMP from adenine: step 1/1. Catalyzes a salvage reaction resulting in the formation of AMP, that is energically less costly than de novo synthesis. This is Adenine phosphoribosyltransferase from Pediococcus pentosaceus (strain ATCC 25745 / CCUG 21536 / LMG 10740 / 183-1w).